Here is a 96-residue protein sequence, read N- to C-terminus: Acylphosphatase (96 aa).

One can recognise an Acylphosphatase-like domain in the interval 4-91 (RVHVYVKGKV…GEFDDFRILY (88 aa)). Active-site residues include Arg-19 and Asn-37.

It belongs to the acylphosphatase family.

It catalyses the reaction an acyl phosphate + H2O = a carboxylate + phosphate + H(+). This is Acylphosphatase (acyP) from Syntrophus aciditrophicus (strain SB).